Reading from the N-terminus, the 75-residue chain is UPF0235 protein Mflv_3569 (75 aa).

Belongs to the UPF0235 family.

The sequence is that of UPF0235 protein Mflv_3569 from Mycolicibacterium gilvum (strain PYR-GCK) (Mycobacterium gilvum (strain PYR-GCK)).